A 50-amino-acid chain; its full sequence is Peptide encoded by miPEP319a (50 aa).

Its function is as follows. Regulatory peptide encoded by the primary transcript (pri-miR319a) of the microRNA miR319a that enhances the accumulation of its corresponding mature miRNA. Acts probably as a transcriptional activator of its corresponding pri-miRNA. The protein is Peptide encoded by miPEP319a of Arabidopsis thaliana (Mouse-ear cress).